The primary structure comprises 180 residues: ATP-dependent protease subunit HslV (180 aa).

Residue Thr5 is part of the active site. Positions 165, 168, and 171 each coordinate Na(+).

It belongs to the peptidase T1B family. HslV subfamily. In terms of assembly, a double ring-shaped homohexamer of HslV is capped on each side by a ring-shaped HslU homohexamer. The assembly of the HslU/HslV complex is dependent on binding of ATP.

Its subcellular location is the cytoplasm. It carries out the reaction ATP-dependent cleavage of peptide bonds with broad specificity.. Allosterically activated by HslU binding. Functionally, protease subunit of a proteasome-like degradation complex believed to be a general protein degrading machinery. This is ATP-dependent protease subunit HslV from Helicobacter pylori (strain G27).